A 280-amino-acid chain; its full sequence is MQEVISYIQKAVLEISNALKFPDTSYSQNQNFTGDTQLKFDVLSDGIITKTLSQCSSIKAIISEEKDEILTLNERANFIVAYDPLDGSSLMDVNFAIGSIFAIYEEKASAKNLRAALYSMYGARLELVICKDQPKLYRLNANNEFIFIKDLKMNEKGKINATGGTQKFWEEKHAKFIKSLFDEGYRLRYSGAMVSDINQILLKGGGIFSYPATQDAPNGKLRAFFEVFPLAFIIEKAGGKTTNGKNHSLLELEFDKIHATTPCFFGSEYEISKLLKAYNE.

Mg(2+) contacts are provided by glutamate 64, aspartate 83, leucine 85, and aspartate 86. Residues 86-89, tyrosine 189, and lysine 220 contribute to the substrate site; that span reads DGSS. Residue glutamate 226 coordinates Mg(2+).

This sequence belongs to the FBPase class 1 family. As to quaternary structure, homotetramer. It depends on Mg(2+) as a cofactor.

It is found in the cytoplasm. The enzyme catalyses beta-D-fructose 1,6-bisphosphate + H2O = beta-D-fructose 6-phosphate + phosphate. It participates in carbohydrate biosynthesis; gluconeogenesis. This Campylobacter jejuni subsp. jejuni serotype O:6 (strain 81116 / NCTC 11828) protein is Fructose-1,6-bisphosphatase class 1.